A 337-amino-acid polypeptide reads, in one-letter code: Ferrochelatase (337 aa).

The Fe cation site is built by H189 and E293.

It belongs to the ferrochelatase family.

The protein resides in the cytoplasm. The catalysed reaction is heme b + 2 H(+) = protoporphyrin IX + Fe(2+). Its pathway is porphyrin-containing compound metabolism; protoheme biosynthesis; protoheme from protoporphyrin-IX: step 1/1. In terms of biological role, catalyzes the ferrous insertion into protoporphyrin IX. This Pseudomonas entomophila (strain L48) protein is Ferrochelatase.